A 733-amino-acid polypeptide reads, in one-letter code: E3 ubiquitin-protein ligase COP1 (733 aa).

The interval 1-43 is disordered; it reads MSGSRQAGSGSAGTSPGSSAASSVTSASSSLSSSPSPPSVAAS. A Nuclear localization signal 1 motif is present at residues 111 to 115; it reads SSRKR. Residues 138-176 form an RING-type zinc finger; that stretch reads CPICFDMIEEAYMTKCGHSFCYKCIHQSLEDNNRCPKCN. Residues 197–208 carry the Nuclear localization signal 2 motif; that stretch reads KQKQRFEEKRFK. Residues 231–306 adopt a coiled-coil conformation; it reads DQDNLDLANV…RVEEMSGLYS (76 aa). A Nuclear export signal motif is present at residues 237-247; the sequence is LANVNLMLELL. The tract at residues 307 to 327 is disordered; sequence PVSEDSTVPQFEAPSPSHSSI. WD repeat units follow at residues 421–460, 470–510, 513–553, 555–595, 599–637, 640–679, and 695–731; these read NGSS…QDAV, TCNS…RSKV, EHEK…SVAS, EAKA…QPIM, GHRK…CLRS, GHIN…TLLT, and EDDT…KVLE. The segment at 645-647 is interaction with TRIB1; it reads KNF.

It belongs to the COP1 family. Homodimer. Homodimerization is mediated by the coiled coil domain. Component of the DCX DET1-COP1 ubiquitin ligase complex at least composed of RBX1, DET1, DDB1, CUL4A and COP1. Isoform 2 does not interact with CUL4A but still binds to RBX1, suggesting that the interaction may be mediated by another cullin protein. Isoform 1 and isoform 2 interact with CUL5 but not with CUL1, CUL2 not CUL3. Interacts with bZIP transcription factors JUN, JUNB and JUND but not with FOS, ATF2 nor XBP1. Interacts with p53 (TP53). Interacts with COPS6; this interaction stabilizes RFWD2 through reducing its auto-ubiquitination and decelerating its turnover rate. Interacts with SFN; this interaction leads to SFN degradation. Interacts with p53/TP53 and MTA1. Interacts with TRIB1 (via C-terminus) and TRIB2.

It is found in the nucleus speckle. The protein resides in the cytoplasm. It carries out the reaction S-ubiquitinyl-[E2 ubiquitin-conjugating enzyme]-L-cysteine + [acceptor protein]-L-lysine = [E2 ubiquitin-conjugating enzyme]-L-cysteine + N(6)-ubiquitinyl-[acceptor protein]-L-lysine.. It participates in protein modification; protein ubiquitination. With respect to regulation, TRIB1 competes with substrates for RFWD2 binding. Its function is as follows. E3 ubiquitin-protein ligase that mediates ubiquitination and subsequent proteasomal degradation of target proteins. E3 ubiquitin ligases accept ubiquitin from an E2 ubiquitin-conjugating enzyme in the form of a thioester and then directly transfers the ubiquitin to targeted substrates. Involved in JUN ubiquitination and degradation. Directly involved in p53 (TP53) ubiquitination and degradation, thereby abolishing p53-dependent transcription and apoptosis. Ubiquitinates p53 independently of MDM2 or RCHY1. Probably mediates E3 ubiquitin ligase activity by functioning as the essential RING domain subunit of larger E3 complexes. In contrast, it does not constitute the catalytic RING subunit in the DCX DET1-COP1 complex that negatively regulates JUN, the ubiquitin ligase activity being mediated by RBX1. Involved in 14-3-3 protein sigma/SFN ubiquitination and proteasomal degradation, leading to AKT activation and promotion of cell survival. Ubiquitinates MTA1 leading to its proteasomal degradation. Upon binding to TRIB1, ubiquitinates CEBPA, which lacks a canonical COP1-binding motif. The chain is E3 ubiquitin-protein ligase COP1 from Mus musculus (Mouse).